The following is a 259-amino-acid chain: MENVYISSYSSNEQISMAVVTTDIRELLSQYVDDANLENLIEWAMEKSSKYYIKNIGNTKSNIEETKFESKNNIGIEYSKDSKNKLSYRNKPSIATHLEYKTLCDMIKGTSGTEKEFLRYLLFGIKCIKKGVEYNIDKIKDVSYNDYFNVLDEKYNTPCPNCKSRNTTPMMIQTRAADEPPLVRHACRDCKQHFKPPKFRAFRNLNVTTQSIHENKEITEILPDNNPSPPESPEPASPIDDGLIRATFDRNDEPPEDDE.

A TFIIS-type zinc finger spans residues 155–195 (YNTPCPNCKSRNTTPMMIQTRAADEPPLVRHACRDCKQHFK). Zn(2+)-binding residues include cysteine 159, cysteine 162, cysteine 187, and cysteine 190. The tract at residues 220–259 (EILPDNNPSPPESPEPASPIDDGLIRATFDRNDEPPEDDE) is disordered. Over residues 226–236 (NPSPPESPEPA) the composition is skewed to pro residues.

It belongs to the poxviridae DNA-directed RNA polymerase 30 kDa subunit family. In terms of assembly, the DNA-dependent RNA polymerase (vRNAP) consists of eight subunits encoded by early viral genes and termed according to their apparent molecular masses Rpo147, Rpo132, Rpo35, Rpo30, Rpo22, Rpo19, Rpo18, and Rpo7. The same holoenzyme, with the addition of the transcription-specificity factor RAP94, is used for early gene expression.

The protein resides in the virion. It is found in the host cytoplasm. It catalyses the reaction RNA(n) + a ribonucleoside 5'-triphosphate = RNA(n+1) + diphosphate. Its function is as follows. Part of the DNA-dependent RNA polymerase which catalyzes the transcription of viral DNA into RNA using the four ribonucleoside triphosphates as substrates. Responsible for the transcription of early, intermediate and late genes. DNA-dependent RNA polymerase associates with the early transcription factor (ETF), itself composed of OPG118 and OPG134, thereby allowing the early genes transcription. Late transcription, and probably also intermediate transcription, require newly synthesized RNA polymerase. The chain is DNA-directed RNA polymerase 30 kDa polypeptide (OPG066) from Monkeypox virus.